Consider the following 460-residue polypeptide: 3-ketoacyl-CoA synthase 7 (460 aa).

Residues 21–41 (FHQFLVASACVLIAVFGYYFF) form a helical membrane-spanning segment. In terms of domain architecture, FAE spans 38 to 328 (YYFFKPRCII…YIISFIQRKW (291 aa)). Residues Cys-183, His-262, His-345, His-349, and Asn-382 contribute to the active site.

It belongs to the thiolase-like superfamily. Chalcone/stilbene synthases family. As to expression, expressed in flowers.

The protein localises to the membrane. The enzyme catalyses a very-long-chain acyl-CoA + malonyl-CoA + H(+) = a very-long-chain 3-oxoacyl-CoA + CO2 + CoA. The protein operates within lipid metabolism; fatty acid biosynthesis. This Arabidopsis thaliana (Mouse-ear cress) protein is 3-ketoacyl-CoA synthase 7.